Consider the following 282-residue polypeptide: Succinate dehydrogenase [ubiquinone] iron-sulfur subunit, mitochondrial (282 aa).

A mitochondrion-targeting transit peptide spans 1-21 (MLRGSTSVCRSLELVTQAARY). The 2Fe-2S ferredoxin-type domain maps to 39–129 (EIYRFNPEEP…TTKIYPLPHM (91 aa)). Residues Cys-89, Cys-94, Cys-97, and Cys-109 each coordinate [2Fe-2S] cluster. Residues 172–202 (EQEKLDGLYECILCACCSASCPSYWWNADKY) enclose the 4Fe-4S ferredoxin-type domain. [4Fe-4S] cluster contacts are provided by Cys-182, Cys-185, and Cys-188. Cys-192 is a binding site for [3Fe-4S] cluster. Residue Trp-197 coordinates a rhodoquinol. Trp-197 contacts a ubiquinone. Cys-239 and Cys-245 together coordinate [3Fe-4S] cluster. Cys-249 provides a ligand contact to [4Fe-4S] cluster.

Belongs to the succinate dehydrogenase/fumarate reductase iron-sulfur protein family. As to quaternary structure, component of the mitochondrial electron transport chain complex II composed of four subunits: a flavoprotein (Fp), an iron-sulfur protein (Ip), and a large cytochrome b (CybL) subunit and a small cytochrome b (CybS) subunit. There are 2 developmental stage-specific forms of complex II which have the Ip and CybL subunits in common. Complex II from the free-living larvae (aerobic environment) acts as a succinate dehydrogenase and is composed of the common subunit Ip and CybL and the stage specific subunits FpL and CybSL. Complex II from parasitic larvae and adults (anaerobic environment) acts as a fumarate reductase and is composed of the common subunit Ip and CybL and the stage specific subunits FpA and CybSA. [2Fe-2S] cluster is required as a cofactor. Requires [3Fe-4S] cluster as cofactor. It depends on [4Fe-4S] cluster as a cofactor. Expressed in adult muscles (at protein level).

The protein resides in the mitochondrion inner membrane. The catalysed reaction is a ubiquinone + succinate = a ubiquinol + fumarate. The enzyme catalyses a rhodoquinone + succinate = a rhodoquinol + fumarate. It functions in the pathway carbohydrate metabolism; tricarboxylic acid cycle; fumarate from succinate (eukaryal route): step 1/1. Its activity is regulated as follows. Inhibited by the fungicide flutolanil. Iron-sulfur protein (Ip) subunit of the mitochondrial electron transport chain complex II which, together with the flavoprotein (Fp) subunit forms the catalytic core of the complex. During the free-living egg-larvae stages, which occur in an aerobic environment, complex II acts as a succinate dehydrogenase by transferring electrons from succinate to ubiquinone. During the parasitic larvae and adult stages, which occur in an anaerobic environment, complex II acts as a fumarate reductase by transferring electrons from rhodoquinol to fumarate. The chain is Succinate dehydrogenase [ubiquinone] iron-sulfur subunit, mitochondrial from Ascaris suum (Pig roundworm).